The primary structure comprises 633 residues: Probable extracellular metalloproteinase 5 (633 aa).

The signal sequence occupies residues 1–20 (MHGLLLAAAGLLSLPLHVLA). Positions 21 to 244 (HPQPSTNLAG…VHNVVDYVSH (224 aa)) are excised as a propeptide. An N-linked (GlcNAc...) asparagine glycan is attached at N285. H428 contacts Zn(2+). Residue E429 is part of the active site. H432 contacts Zn(2+). 2 N-linked (GlcNAc...) asparagine glycosylation sites follow: N592 and N621.

Belongs to the peptidase M36 family. Requires Zn(2+) as cofactor.

The protein localises to the secreted. Its function is as follows. Secreted metalloproteinase probably acting as a virulence factor. The protein is Probable extracellular metalloproteinase 5 (MEP5) of Arthroderma benhamiae (strain ATCC MYA-4681 / CBS 112371) (Trichophyton mentagrophytes).